Reading from the N-terminus, the 267-residue chain is Orotidine 5'-phosphate decarboxylase (267 aa).

Residues aspartate 37, 59–61 (KTH), 91–100 (DRKFADIGNT), tyrosine 217, and arginine 235 each bind substrate. Lysine 93 functions as the Proton donor in the catalytic mechanism.

The protein belongs to the OMP decarboxylase family.

It carries out the reaction orotidine 5'-phosphate + H(+) = UMP + CO2. The protein operates within pyrimidine metabolism; UMP biosynthesis via de novo pathway; UMP from orotate: step 2/2. This is Orotidine 5'-phosphate decarboxylase (URA3) from Kluyveromyces marxianus (Yeast).